The primary structure comprises 796 residues: DNA damage-responsive transcriptional repressor RPH1 (796 aa).

The 42-residue stretch at 14 to 55 (VPVFKPTYEQFEDFYAYCKAINKYGMKSGVVKVIPPKEWKDK) folds into the JmjN domain. Residues 193–355 (PEGLNVWNVA…IGKKAGKCHC (163 aa)) enclose the JmjC domain. Thr399 bears the Phosphothreonine mark. Residues Ser430, Ser459, Ser557, Ser561, Ser575, and Ser584 each carry the phosphoserine modification. Residues 455-471 (KRISSFQEQPLNKLLKR) carry the Bipartite nuclear localization signal motif. The segment at 599-692 (RQQHSQQHSF…DKEQGSSPLN (94 aa)) is disordered. Polar residues predominate over residues 601 to 621 (QHSQQHSFSTPSTVSNLSTSV). Residues 629–640 (NDIKTPHPERPN) are compositionally biased toward basic and acidic residues. At Ser652 the chain carries Phosphoserine. The span at 654–669 (VETSKSNLILSKVAST) shows a compositional bias: polar residues. Over residues 670–686 (RQEDSFTSRNDDLDKEQ) the composition is skewed to basic and acidic residues. Phosphoserine is present on Ser689. Residues 709–732 (YICKECQRKFSSGHHLTRHKKSVH) form a C2H2-type 1 zinc finger. The C2H2-type 2; atypical zinc-finger motif lies at 738 to 763 (HSCPKCGKRFKRRDHVLQHLNKKIPC). Residues 774–796 (IMNPTVQPQDGKAAINQQSTPLN) form a disordered region.

In terms of processing, RAD53-dependent phosphorylated in response to DNA damage.

Its subcellular location is the nucleus. Functionally, transcriptional repressor of photolyase PHR1. Recognizes and binds the sequence AG(4) in the upstream repressing sequence of PHR1. Derepresses PHR1 transcription when phosphorylated. This Saccharomyces cerevisiae (strain ATCC 204508 / S288c) (Baker's yeast) protein is DNA damage-responsive transcriptional repressor RPH1 (RPH1).